We begin with the raw amino-acid sequence, 185 residues long: Ribosome-recycling factor (185 aa).

It belongs to the RRF family.

It is found in the cytoplasm. Its function is as follows. Responsible for the release of ribosomes from messenger RNA at the termination of protein biosynthesis. May increase the efficiency of translation by recycling ribosomes from one round of translation to another. The protein is Ribosome-recycling factor of Streptococcus gordonii (strain Challis / ATCC 35105 / BCRC 15272 / CH1 / DL1 / V288).